A 360-amino-acid polypeptide reads, in one-letter code: Peptide chain release factor 1 (360 aa).

Gln235 is modified (N5-methylglutamine). Positions 281–307 (ERQRADSERSADRRNQVGSGDRSERIR) are enriched in basic and acidic residues. Positions 281–310 (ERQRADSERSADRRNQVGSGDRSERIRTYN) are disordered.

It belongs to the prokaryotic/mitochondrial release factor family. Methylated by PrmC. Methylation increases the termination efficiency of RF1.

The protein resides in the cytoplasm. Functionally, peptide chain release factor 1 directs the termination of translation in response to the peptide chain termination codons UAG and UAA. The polypeptide is Peptide chain release factor 1 (Sinorhizobium medicae (strain WSM419) (Ensifer medicae)).